The sequence spans 384 residues: Na(+)/H(+) antiporter NhaA (384 aa).

A run of 11 helical transmembrane segments spans residues 17–37, 53–73, 89–109, 118–138, 147–167, 171–191, 198–218, 251–271, 283–303, 321–341, and 354–374; these read SGLFLISCTLFSLVIANSAIA, LEYWINDGLMTIFFLLIGLEL, MLPIFGAIGGMIVPAGLFLVM, GAGIPMATDIAFALAILSLLG, IFLTALAVIDDLGAILIIAVF, TLLWTNLCIALGIFGFLLILN, LIPYLIGGVFMWYFMLHSGVH, PVAFFILPLFALANTAIVLSS, IGIALGLIIGKPLGIFLLSML, ILAVGFLGGIGFTMSIFITLL, and FVILISSLIAGIIGYFSLKYV.

It belongs to the NhaA Na(+)/H(+) (TC 2.A.33) antiporter family.

The protein resides in the cell inner membrane. It catalyses the reaction Na(+)(in) + 2 H(+)(out) = Na(+)(out) + 2 H(+)(in). In terms of biological role, na(+)/H(+) antiporter that extrudes sodium in exchange for external protons. The chain is Na(+)/H(+) antiporter NhaA from Flavobacterium psychrophilum (strain ATCC 49511 / DSM 21280 / CIP 103535 / JIP02/86).